Here is a 307-residue protein sequence, read N- to C-terminus: Putative ankyrin repeat protein R229 (307 aa).

ANK repeat units lie at residues 135–164, 165–194, 196–224, 226–254, 256–284, and 286–307; these read ASRV…DINV, DNDK…NVHA, DDEA…NVNA, NDYA…NPMA, RYYP…SMVY, and SYAM…LLLD.

The chain is Putative ankyrin repeat protein R229 from Acanthamoeba polyphaga (Amoeba).